The sequence spans 146 residues: Catabolic 3-dehydroquinase (146 aa).

Tyr24 functions as the Proton acceptor in the catalytic mechanism. Asn78, His84, and Asp91 together coordinate substrate. His104 (proton donor) is an active-site residue. Substrate is bound by residues 105–106 (IT) and Arg115.

The protein belongs to the type-II 3-dehydroquinase family. As to quaternary structure, homododecamer. Adopts a ring-like structure, composed of an arrangement of two hexameric rings stacked on top of one another.

It carries out the reaction 3-dehydroquinate = 3-dehydroshikimate + H2O. It functions in the pathway aromatic compound metabolism; 3,4-dihydroxybenzoate biosynthesis; 3,4-dihydroxybenzoate from 3-dehydroquinate: step 1/2. Functionally, is involved in the catabolism of quinate. Allows the utilization of quinate as carbon source via the beta-ketoadipate pathway. The chain is Catabolic 3-dehydroquinase from Candida albicans (strain SC5314 / ATCC MYA-2876) (Yeast).